Here is a 116-residue protein sequence, read N- to C-terminus: Large ribosomal subunit protein bL19 (116 aa).

This sequence belongs to the bacterial ribosomal protein bL19 family.

This protein is located at the 30S-50S ribosomal subunit interface and may play a role in the structure and function of the aminoacyl-tRNA binding site. The polypeptide is Large ribosomal subunit protein bL19 (Pseudomonas aeruginosa (strain LESB58)).